Consider the following 419-residue polypeptide: O-antigen ligase (419 aa).

The Cytoplasmic portion of the chain corresponds to 1-19 (MLTSFKLHSLKPYTLKSSM). The helical transmembrane segment at 20–38 (ILEIITYILCFFSMIIAFV) threads the bilayer. At 39–43 (DNTFS) the chain is on the periplasmic side. Residues 44–61 (IKIYNITAIVCLLSLILR) traverse the membrane as a helical segment. Residues 62-71 (GRQENYNIKN) lie on the Cytoplasmic side of the membrane. Residues 72–91 (LILPLSIFLIGLLDLIWYSA) traverse the membrane as a helical segment. Topologically, residues 92–107 (FKVDNSPFRATYHSYL) are periplasmic. A helical transmembrane segment spans residues 108–125 (NTAKIFIFGSFIVFLTLT). The Cytoplasmic segment spans residues 126 to 134 (SQLKSKKES). Residues 135–153 (VLYTLYSLSFLIAGYAMYI) form a helical membrane-spanning segment. Topologically, residues 154 to 167 (NSIHENDRISFGVG) are periplasmic. Residues 168-187 (TATGAAYSTMLIGIVSGVAI) form a helical membrane-spanning segment. Residues 188 to 194 (LYTKKNH) lie on the Cytoplasmic side of the membrane. Residues 195 to 211 (PFLFLLNSCAVLYVLAL) traverse the membrane as a helical segment. Over 212–216 (TQTRA) the chain is Periplasmic. Residues 217–234 (TLLLFPIICVAALIAYYN) form a helical membrane-spanning segment. Over 235-240 (KSPKKF) the chain is Cytoplasmic. Residues 241 to 259 (TSSIVLLIAILASIVIIFN) traverse the membrane as a helical segment. Topologically, residues 260 to 348 (KPIQNRYNEA…NEIIEAGSLK (89 aa)) are periplasmic. The helical transmembrane segment at 349-367 (GLMGIFSTLFLYFSLFYIA) threads the bilayer. At 368–372 (YKKRA) the chain is on the cytoplasmic side. The chain crosses the membrane as a helical span at residues 373–391 (LGLLILTLGIVGIGLSDVI). The Periplasmic portion of the chain corresponds to 392 to 396 (IWARS). The helical transmembrane segment at 397–412 (IPIIIISAIVLLLVIN) threads the bilayer. Residues 413–419 (NRNNTIN) lie on the Cytoplasmic side of the membrane.

In terms of assembly, homodimer.

It localises to the cell inner membrane. It carries out the reaction a lipid-linked O antigen + a lipid A-core oligosaccharide = a lipopolysaccharide + a polyisoprenyl diphosphate.. It participates in bacterial outer membrane biogenesis; lipopolysaccharide biosynthesis. Activity does not require ATP and magnesium ions. In terms of biological role, transferase involved in the biosynthesis of the lipopolysaccharide (LPS). In vitro, catalyzes the transfer of a polymerized O-antigen molecule from its polyprenyl diphosphate membrane anchor to a terminal sugar of the lipid A-core oligosaccharide, finalizing the biosynthesis of the lipopolysaccharide. The enzyme is functional and can be used to give diverse hybrid O-antigens in vitro, but K12 strains do not produce the O-antigen in vivo due to mutations in the rfb gene cluster. K12 strains are phenotypically rough, their lipopolysaccharide having a complete core structure, but no O-antigen. In highly mucoid K12 strains, WaaL can ligate colanic acid (CA or M-antigen) repeats to a significant proportion of lipopolysaccharide (LPS) core acceptor molecules, forming the LPS glycoform M(LPS). The attachment point was identified as O-7 of the L-glycero-D-manno-heptose of the outer LPS core, the same position used for O-antigen ligation. Cannot catalyze ATP hydrolysis in vitro. The sequence is that of O-antigen ligase from Escherichia coli (strain K12).